We begin with the raw amino-acid sequence, 337 residues long: F420-dependent glucose-6-phosphate dehydrogenase (337 aa).

Residue aspartate 44 coordinates coenzyme F420-(gamma-Glu)n. Catalysis depends on histidine 45, which acts as the Proton donor. Coenzyme F420-(gamma-Glu)n is bound by residues threonine 81 and 112–113 (TG). Residue glutamate 114 is the Proton acceptor of the active site. Residues asparagine 117, 180 to 181 (GG), and 183 to 184 (GV) each bind coenzyme F420-(gamma-Glu)n. Threonine 198, lysine 201, lysine 262, and arginine 286 together coordinate substrate.

The protein belongs to the F420-dependent glucose-6-phosphate dehydrogenase family. As to quaternary structure, homodimer.

The enzyme catalyses oxidized coenzyme F420-(gamma-L-Glu)(n) + D-glucose 6-phosphate + H(+) = 6-phospho-D-glucono-1,5-lactone + reduced coenzyme F420-(gamma-L-Glu)(n). Functionally, catalyzes the coenzyme F420-dependent oxidation of glucose 6-phosphate (G6P) to 6-phosphogluconolactone. The polypeptide is F420-dependent glucose-6-phosphate dehydrogenase (Kineococcus radiotolerans (strain ATCC BAA-149 / DSM 14245 / SRS30216)).